We begin with the raw amino-acid sequence, 511 residues long: 2-isopropylmalate synthase (511 aa).

Residues 5–267 enclose the Pyruvate carboxyltransferase domain; the sequence is IQIFDTTLRD…QTQINLEETK (263 aa). Mn(2+) is bound by residues Asp14, His202, His204, and Asn238. The tract at residues 391-511 is regulatory domain; the sequence is KVETLQLQFV…NTKVEEGIHS (121 aa).

The protein belongs to the alpha-IPM synthase/homocitrate synthase family. LeuA type 1 subfamily. Homodimer. Mn(2+) serves as cofactor.

It is found in the cytoplasm. It catalyses the reaction 3-methyl-2-oxobutanoate + acetyl-CoA + H2O = (2S)-2-isopropylmalate + CoA + H(+). It participates in amino-acid biosynthesis; L-leucine biosynthesis; L-leucine from 3-methyl-2-oxobutanoate: step 1/4. Catalyzes the condensation of the acetyl group of acetyl-CoA with 3-methyl-2-oxobutanoate (2-ketoisovalerate) to form 3-carboxy-3-hydroxy-4-methylpentanoate (2-isopropylmalate). The protein is 2-isopropylmalate synthase of Staphylococcus saprophyticus subsp. saprophyticus (strain ATCC 15305 / DSM 20229 / NCIMB 8711 / NCTC 7292 / S-41).